Reading from the N-terminus, the 880-residue chain is MAKKRIYEVAKELDIENKIVVKKAQDLGFDVKSHMSSLDDKQVSKLVDSLKSTNTTPSTEKDSKNSSRKEKAKIKVSVGAIRRRDNKNEHDNRHGNNKHRNNNFKKQQNNRRENEDKKTTSAKPAARDLLNKFKKKQRAEASELNAQTEASRRKWHQEQNPQRSKVKKVENTRKPKEEKLEGAAAVKARVQASQKPVGPKIIKPSPARNKAKRPTVKKVEPIAPVVPAPQKEETKPTRKKDFTRKKREVPDYERERSEHSDKARRRRNKKNKRINQSKEVKKQPTQRKERPLPETLVYEEGMNAQDLGKLLHREPAEIVKKLFMLGVMTNQNQSLDKDTIELLAAEYGIEAEEKVHEDISDIDTLYTKEMEESKASKHQEKRPPVVTIMGHVDHGKTTLLDRLRHTNVSEHEAGGITQRIGAYQVRIDDRLITFLDTPGHAAFSNMRARGAEITDIVILVVAADDGVMPQTIEAIDHAKSAGVPIIVAVNKIDKPGANPDHVMEQLMKYGLVPEDWGGDTIFVKISAKTGKNVEELLQMILLQADVMELKADPDQKAIGTVIEARLDKGRGSVADILVQQGTLKVGDPIVVGDTFGRVRVMTNDKGRRVKKATPSTPVEITGLNDVPEAADKLVVFDDEKTARSVGEQRAKNALEKQRENVQHVTLDNLFDTMKKENMKEVDIVLKADVQGSAEALQQSLEKIEVEGVRVNIIHSGVGAINESDVTLAGASNAFIVGFNVRPTNTAKSQADSEGVDIRLYNIIYKVMDDVEAAMKGMLEPTYEEKVTGNLTVRETWKVSKIGTIAGAFVDNGYVTRDSGIRVIRDGIVKYDGKVASLKRFKDDVKEVKQGFDCGITIENFNDIKVDDQLEAYEMQEVPVK.

7 stretches are compositionally biased toward basic and acidic residues: residues 34-43 (HMSSLDDKQV), 59-69 (TEKDSKNSSRK), 82-94 (RRRD…DNRH), 110-131 (NRRE…DLLN), 167-181 (KKVE…EKLE), 230-240 (QKEETKPTRKK), and 248-261 (EVPD…EHSD). Positions 34–297 (HMSSLDDKQV…KERPLPETLV (264 aa)) are disordered. Positions 262 to 275 (KARRRRNKKNKRIN) are enriched in basic residues. The segment covering 276-292 (QSKEVKKQPTQRKERPL) has biased composition (basic and acidic residues). Positions 381 to 550 (KRPPVVTIMG…LLQADVMELK (170 aa)) constitute a tr-type G domain. The G1 stretch occupies residues 390–397 (GHVDHGKT). GTP is bound at residue 390-397 (GHVDHGKT). A G2 region spans residues 415-419 (GITQR). Residues 436-439 (DTPG) are G3. Residues 436–440 (DTPGH) and 490–493 (NKID) each bind GTP. Positions 490-493 (NKID) are G4. A G5 region spans residues 526–528 (SAK).

It belongs to the TRAFAC class translation factor GTPase superfamily. Classic translation factor GTPase family. IF-2 subfamily.

Its subcellular location is the cytoplasm. In terms of biological role, one of the essential components for the initiation of protein synthesis. Protects formylmethionyl-tRNA from spontaneous hydrolysis and promotes its binding to the 30S ribosomal subunits. Also involved in the hydrolysis of GTP during the formation of the 70S ribosomal complex. The sequence is that of Translation initiation factor IF-2 from Lactobacillus johnsonii (strain CNCM I-12250 / La1 / NCC 533).